A 258-amino-acid polypeptide reads, in one-letter code: Methanol--corrinoid protein (258 aa).

The 95-residue stretch at A30–G124 folds into the B12-binding N-terminal domain. Positions K123–V248 constitute a B12-binding domain. H136 is a methylcob(III)alamin binding site.

This sequence belongs to the methylamine corrinoid protein family. Heterotetramer, composed of 2 MtaB and 2 MtaC subunits.

In terms of biological role, harbors a corrinoid prosthetic group and acts as a methyl group carrier in methanogenesis in the methanol pathway. The methyl group of methanol is first transferred to the corrinoid prosthetic group of MtaC in the cob(I)amide oxidation state. This reaction is mediated by MtaB. The methyl group from MtaC is then transferred to coenzyme M by MtaA. The chain is Methanol--corrinoid protein (mtaC) from Methanosarcina barkeri (strain Fusaro / DSM 804).